Consider the following 1026-residue polypeptide: Tyrosine-protein phosphatase 1 (1026 aa).

One can recognise an FERM domain in the interval 29 to 315 (IRCTVTFLDS…EQHTFFRLKT (287 aa)). 4 disordered regions span residues 376–396 (SIDSSRYTNTTTTDSPELPSS), 430–456 (PLTTPLSPRRTRDYATDSESSAPSLRQ), 489–515 (GIHASTASVRPVSSGSTPNGASRKSAN), and 584–616 (SFASAGIGGSPPRSKRSPQSNKSSSPVGEDQVV). Residues 446 to 456 (DSESSAPSLRQ) show a composition bias toward polar residues. Residues 600-609 (SPQSNKSSSP) are compositionally biased toward low complexity. In terms of domain architecture, PDZ spans 617–689 (TIKMRPDRHG…DHVVQFIRSA (73 aa)). One can recognise a Tyrosine-protein phosphatase domain in the interval 753 to 1011 (VVDHFEMLYR…TFVCESILRA (259 aa)). Residues Asp920, 952-958 (CSAGIGR), and Gln996 contribute to the substrate site. The Phosphocysteine intermediate role is filled by Cys952.

This sequence belongs to the protein-tyrosine phosphatase family. Non-receptor class subfamily.

The protein localises to the cytoplasm. It localises to the cytoskeleton. It carries out the reaction O-phospho-L-tyrosyl-[protein] + H2O = L-tyrosyl-[protein] + phosphate. This is Tyrosine-protein phosphatase 1 (ptp-1) from Caenorhabditis elegans.